A 175-amino-acid polypeptide reads, in one-letter code: MLDLGLSKMALIGVVALVVLGPERLPRVARTAGALFGRAQRYINDVKAEVSREIELDALRTMKSDFEQAARNVENTIHDNLREHERDLNAAWNSAVSSGDPAAADASGGLGATSDEPSWRTVAAAPAKRRNWRVKKTATPVWYKRATMRRTQVQSGAARVARHQPSSLRRPARFF.

The chain crosses the membrane as a helical span at residues Met1–Gly21. Over residues Gly99–Asp115 the composition is skewed to low complexity. Positions Gly99–Ser118 are disordered.

The protein belongs to the TatB family. The Tat system comprises two distinct complexes: a TatABC complex, containing multiple copies of TatA, TatB and TatC subunits, and a separate TatA complex, containing only TatA subunits. Substrates initially bind to the TatABC complex, which probably triggers association of the separate TatA complex to form the active translocon.

The protein resides in the cell inner membrane. In terms of biological role, part of the twin-arginine translocation (Tat) system that transports large folded proteins containing a characteristic twin-arginine motif in their signal peptide across membranes. Together with TatC, TatB is part of a receptor directly interacting with Tat signal peptides. TatB may form an oligomeric binding site that transiently accommodates folded Tat precursor proteins before their translocation. The chain is Sec-independent protein translocase protein TatB from Burkholderia thailandensis (strain ATCC 700388 / DSM 13276 / CCUG 48851 / CIP 106301 / E264).